Here is a 143-residue protein sequence, read N- to C-terminus: Nucleoside diphosphate kinase (143 aa).

The 132-residue stretch at 1 to 132 folds into the NDPK-like domain; the sequence is MVKPDGVQRG…LWFSPQELCQ (132 aa). 7 residues coordinate ADP: Lys3, Phe51, Arg79, Thr85, Arg96, Val103, and Asn106. The ATP site is built by Lys3, Phe51, Arg79, Thr85, and Arg96. Asn106 serves as a coordination point for ATP. The Pros-phosphohistidine intermediate role is filled by His109.

Belongs to the NDK family. As to quaternary structure, homohexamer. Mg(2+) serves as cofactor.

It carries out the reaction a 2'-deoxyribonucleoside 5'-diphosphate + ATP = a 2'-deoxyribonucleoside 5'-triphosphate + ADP. The enzyme catalyses a ribonucleoside 5'-diphosphate + ATP = a ribonucleoside 5'-triphosphate + ADP. It catalyses the reaction GDP + ATP = GTP + ADP. It functions in the pathway purine metabolism; purine nucleotide biosynthesis. Its function is as follows. Major role in the synthesis of nucleoside triphosphates other than ATP. The ATP gamma phosphate is transferred to the NDP beta phosphate via a ping-pong mechanism, using a phosphorylated active-site intermediate. The sequence is that of Nucleoside diphosphate kinase from Schistosoma mansoni (Blood fluke).